Reading from the N-terminus, the 1440-residue chain is Genome polyprotein (1440 aa).

A propeptide spans G32 to A53 (ER anchor for the capsid protein C, removed in mature form by serine protease NS3). The helical transmembrane segment at G36–L56 threads the bilayer. At S57 to N180 the chain is on the extracellular side. Residue N68 is glycosylated (N-linked (GlcNAc...) asparagine; by host). Residues W181 to S201 form a helical membrane-spanning segment. The Cytoplasmic portion of the chain corresponds to N202–R207. A helical membrane pass occupies residues W208–S222. Residues F223 to L674 lie on the Extracellular side of the membrane. Cystine bridges form between C225-C252, C282-C338, C282-C343, C296-C327, C314-C338, and C314-C343. The fusion peptide stretch occupies residues D320–G333. An N-linked (GlcNAc...) asparagine; by host glycan is attached at N376. Intrachain disulfides connect C412–C509 and C526–C557. A helical transmembrane segment spans residues F675–V695. Over N696–S701 the chain is Cytoplasmic. A helical transmembrane segment spans residues I702–A722. Residues D723–D1147 are Extracellular-facing. 6 disulfide bridges follow: C726–C737, C777–C865, C901–C945, C1002–C1051, C1013–C1034, and C1035–C1038. 2 N-linked (GlcNAc...) asparagine; by host glycosylation sites follow: N852 and N929. A helical transmembrane segment spans residues V1148–M1168. The Cytoplasmic segment spans residues L1169–N1178. Residues V1179–V1199 traverse the membrane as a helical segment. Residue H1200 is a topological domain, lumenal. A helical transmembrane segment spans residues G1201 to T1221. Over S1222 to R1237 the chain is Cytoplasmic. The chain crosses the membrane as a helical span at residues A1238 to Q1258. Residues E1259–G1269 are Lumenal-facing. Residues A1270 to A1290 form a helical membrane-spanning segment. At G1291 to G1302 the chain is on the cytoplasmic side. A helical transmembrane segment spans residues W1303–A1323. Over E1324–D1326 the chain is Lumenal. A helical membrane pass occupies residues I1327 to S1347. Over G1348–S1404 the chain is Cytoplasmic. Residues L1355 to V1394 form an interacts with and activates NS3 protease region. An intramembrane region (helical) is located at residues C1405–L1425. The Cytoplasmic portion of the chain corresponds to T1426–P1440.

In terms of assembly, homodimer. Interacts (via N-terminus) with host EXOC1 (via C-terminus); this interaction results in EXOC1 degradation through the proteasome degradation pathway. Forms heterodimers with envelope protein E in the endoplasmic reticulum and Golgi. As to quaternary structure, homodimer; in the endoplasmic reticulum and Golgi. Interacts with protein prM. Interacts with non-structural protein 1. In terms of assembly, homodimer; Homohexamer when secreted. Interacts with envelope protein E. NS1 interacts with NS4B. Interacts with host complement protein CFH; this interaction leads to the degradation of C3. Interacts (via N-terminus) with serine protease NS3. As to quaternary structure, forms a heterodimer with serine protease NS3. May form homooligomers. In terms of assembly, forms a heterodimer with NS2B. Interacts with non-structural protein 2A (via N-terminus). Interacts with NS4B. Interacts with unphosphorylated RNA-directed RNA polymerase NS5; this interaction stimulates RNA-directed RNA polymerase NS5 guanylyltransferase activity. It depends on Mn(2+) as a cofactor. Mg(2+) serves as cofactor. In terms of processing, specific enzymatic cleavages in vivo yield mature proteins. Cleavages in the lumen of endoplasmic reticulum are performed by host signal peptidase, whereas cleavages in the cytoplasmic side are performed by serine protease NS3. Signal cleavage at the 2K-4B site requires a prior NS3 protease-mediated cleavage at the 4A-2K site. Cleaved in post-Golgi vesicles by a host furin, releasing the mature small envelope protein M, and peptide pr. This cleavage is incomplete as up to 30% of viral particles still carry uncleaved prM. Post-translationally, N-glycosylated. In terms of processing, N-glycosylated. The excreted form is glycosylated and this is required for efficient secretion of the protein from infected cells. RNA-directed RNA polymerase NS5: Phosphorylated on serines residues. This phosphorylation may trigger NS5 nuclear localization.

It is found in the virion. The protein resides in the host nucleus. It localises to the host cytoplasm. The protein localises to the host perinuclear region. Its subcellular location is the secreted. It is found in the virion membrane. The protein resides in the host endoplasmic reticulum membrane. The enzyme catalyses Selective hydrolysis of -Xaa-Xaa-|-Yaa- bonds in which each of the Xaa can be either Arg or Lys and Yaa can be either Ser or Ala.. It carries out the reaction a ribonucleoside 5'-triphosphate + H2O = a ribonucleoside 5'-diphosphate + phosphate + H(+). It catalyses the reaction ATP + H2O = ADP + phosphate + H(+). In terms of biological role, plays a role in virus budding by binding to the cell membrane and gathering the viral RNA into a nucleocapsid that forms the core of a mature virus particle. During virus entry, may induce genome penetration into the host cytoplasm after hemifusion induced by the surface proteins. Can migrate to the cell nucleus where it modulates host functions. Overcomes the anti-viral effects of host EXOC1 by sequestering and degrading the latter through the proteasome degradation pathway. Inhibits RNA silencing by interfering with host Dicer. Functionally, prevents premature fusion activity of envelope proteins in trans-Golgi by binding to envelope protein E at pH 6.0. After virion release in extracellular space, gets dissociated from E dimers. Its function is as follows. Acts as a chaperone for envelope protein E during intracellular virion assembly by masking and inactivating envelope protein E fusion peptide. prM is the only viral peptide matured by host furin in the trans-Golgi network probably to avoid catastrophic activation of the viral fusion activity in acidic Golgi compartment prior to virion release. prM-E cleavage is inefficient, and many virions are only partially matured. These uncleaved prM would play a role in immune evasion. In terms of biological role, may play a role in virus budding. Exerts cytotoxic effects by activating a mitochondrial apoptotic pathway through M ectodomain. May display a viroporin activity. Binds to host cell surface receptor and mediates fusion between viral and cellular membranes. Envelope protein is synthesized in the endoplasmic reticulum in the form of heterodimer with protein prM. They play a role in virion budding in the ER, and the newly formed immature particle is covered with 60 spikes composed of heterodimer between precursor prM and envelope protein E. The virion is transported to the Golgi apparatus where the low pH causes dissociation of PrM-E heterodimers and formation of E homodimers. prM-E cleavage is inefficient, and many virions are only partially matured. These uncleaved prM would play a role in immune evasion. Functionally, involved in immune evasion, pathogenesis and viral replication. Once cleaved off the polyprotein, is targeted to three destinations: the viral replication cycle, the plasma membrane and the extracellular compartment. Essential for viral replication. Required for formation of the replication complex and recruitment of other non-structural proteins to the ER-derived membrane structures. Excreted as a hexameric lipoparticle that plays a role against host immune response. Antagonizing the complement function. Binds to the host macrophages and dendritic cells. Inhibits signal transduction originating from Toll-like receptor 3 (TLR3). Its function is as follows. Component of the viral RNA replication complex that functions in virion assembly and antagonizes the host alpha/beta interferon antiviral response. In terms of biological role, required cofactor for the serine protease function of NS3. May have membrane-destabilizing activity and form viroporins. Displays three enzymatic activities: serine protease, NTPase and RNA helicase. NS3 serine protease, in association with NS2B, performs its autocleavage and cleaves the polyprotein at dibasic sites in the cytoplasm: C-prM, NS2A-NS2B, NS2B-NS3, NS3-NS4A, NS4A-2K and NS4B-NS5. NS3 RNA helicase binds RNA and unwinds dsRNA in the 3' to 5' direction. Functionally, non-structural protein 4A: Regulates the ATPase activity of the NS3 helicase activity. NS4A allows NS3 helicase to conserve energy during unwinding. Its function is as follows. Peptide 2k: Functions as a signal peptide for NS4B and is required for the interferon antagonism activity of the latter. In terms of biological role, non-structural protein 4B: Induces the formation of ER-derived membrane vesicles where the viral replication takes place. Inhibits interferon (IFN)-induced host STAT1 phosphorylation and nuclear translocation, thereby preventing the establishment of cellular antiviral state by blocking the IFN-alpha/beta pathway. Inhibits STAT2 translocation in the nucleus after IFN-alpha treatment. RNA-directed RNA polymerase NS5: Replicates the viral (+) and (-) RNA genome. Performs the capping of genomes in the cytoplasm. NS5 methylates viral RNA cap at guanine N-7 and ribose 2'-O positions. Besides its role in RNA genome replication, also prevents the establishment of cellular antiviral state by blocking the interferon-alpha/beta (IFN-alpha/beta) signaling pathway. Inhibits host TYK2 and STAT2 phosphorylation, thereby preventing activation of JAK-STAT signaling pathway. In Japanese encephalitis virus (strain Nakayama) (JEV), this protein is Genome polyprotein.